Consider the following 334-residue polypeptide: Ficolin-1 (334 aa).

A signal peptide spans 1-17 (MQWPTLWAFSGLLCLCP). Residues 47–117 (SCPGFPGPPG…SLGEKELGDT (71 aa)) are disordered. The Collagen-like domain occupies 50 to 88 (GFPGPPGPKGEPGSPAGRGERGFQGSPGKMGPAGSKGEP). The Fibrinogen C-terminal domain maps to 117–334 (TLCQRGPRSC…KVAEMKIRAS (218 aa)). Disulfide bonds link Cys-119–Cys-147 and Cys-126–Cys-154. The segment at 123-162 (PRSCKDLLTRGIFLTGWYTIHLPDCRPLTVLCDMDVDGGG) is a domain; contributes to trimerization. Residues 163–251 (WTVFQRRVDG…LTLGQFLEGT (89 aa)) are b domain; contributes to trimerization. Asn-261 is a glycosylation site (N-linked (GlcNAc...) asparagine). Ca(2+) contacts are provided by Asp-270 and Asp-272. Cys-278 and Cys-291 form a disulfide bridge. Residue 290–292 (NCH) coordinates a carbohydrate. The segment at 325–334 (KVAEMKIRAS) is p domain.

This sequence belongs to the ficolin lectin family. Homotrimer. Interacts with elastin/ELN. Interacts (via Fibrinogen C-terminal domain) with FFAR2. Interacts with CRP; may regulate monocyte activation by FCN1. In terms of tissue distribution, highly expressed in liver and spleen.

It is found in the secreted. The protein localises to the cell membrane. Functionally, extracellular lectin functioning as a pattern-recognition receptor in innate immunity. Binds the sugar moieties of pathogen-associated molecular patterns (PAMPs) displayed on microbes and activates the lectin pathway of the complement system. May also activate monocytes through a G protein-coupled receptor, FFAR2, inducing the secretion of interleukin-8/IL-8. Binds preferentially to 9-O-acetylated 2-6-linked sialic acid derivatives and to various glycans containing sialic acid engaged in a 2-3 linkage. In Mus musculus (Mouse), this protein is Ficolin-1 (Fcn1).